We begin with the raw amino-acid sequence, 244 residues long: tRNA1(Val) (adenine(37)-N6)-methyltransferase (244 aa).

This sequence belongs to the methyltransferase superfamily. tRNA (adenine-N(6)-)-methyltransferase family.

Its subcellular location is the cytoplasm. It carries out the reaction adenosine(37) in tRNA1(Val) + S-adenosyl-L-methionine = N(6)-methyladenosine(37) in tRNA1(Val) + S-adenosyl-L-homocysteine + H(+). Specifically methylates the adenine in position 37 of tRNA(1)(Val) (anticodon cmo5UAC). This Shewanella sediminis (strain HAW-EB3) protein is tRNA1(Val) (adenine(37)-N6)-methyltransferase.